The sequence spans 214 residues: Putative pyrophosphatase PpaX (214 aa).

Aspartate 8 (nucleophile) is an active-site residue.

It belongs to the HAD-like hydrolase superfamily. PpaX family. The cofactor is Mg(2+).

The enzyme catalyses diphosphate + H2O = 2 phosphate + H(+). This is Putative pyrophosphatase PpaX from Clostridium perfringens (strain 13 / Type A).